The chain runs to 1003 residues: Cation-transporting ATPase HMA5 (1003 aa).

Residues 6–25 (LSAVAGGGRPAAAGGGGDEM) are disordered. Residues 10 to 22 (AGGGRPAAAGGGG) are compositionally biased toward gly residues. 3 consecutive HMA domains span residues 51 to 117 (EEAH…FDAE), 133 to 199 (LSAQ…FEAA), and 207 to 273 (DKIL…NGRL). Cu cation-binding residues include cysteine 62, cysteine 65, cysteine 144, and cysteine 147. The next 8 helical transmembrane spans lie at 302–322 (SLFLSIPVFFIRMVCPHIPFI), 331–351 (GPFHMGDLLKWILVSIVQFVV), 372–392 (VLVVLGTTASYVYSVCALLYG), 396–416 (GFHPPIYFETSAMIITFVLFG), 562–582 (IFVPIVITLSMITFLVWFLCG), 599–619 (FVFSLMFAIAVVVIACPCALG), 938–958 (FFAMAYNVVAIPVAAGALFPF), and 966–986 (WLAGACMAFSSVSVVCSSLLL).

Belongs to the cation transport ATPase (P-type) (TC 3.A.3) family. Type IB subfamily. In terms of tissue distribution, expressed in root vascular cylinder, vascular bundles and mesophyll cells of leaf blades, and anther walls and microspores of stamens.

Its subcellular location is the cell membrane. In terms of biological role, metal efflux transporter that may play a role in detoxification of heavy metals, such as zinc, copper, lead and cadmium, especially in the shoots. The polypeptide is Cation-transporting ATPase HMA5 (Oryza sativa subsp. japonica (Rice)).